The chain runs to 138 residues: Small ribosomal subunit protein uS11 (138 aa).

Belongs to the universal ribosomal protein uS11 family. In terms of assembly, part of the 30S ribosomal subunit.

Functionally, located on the platform of the 30S subunit. The protein is Small ribosomal subunit protein uS11 of Pyrobaculum arsenaticum (strain DSM 13514 / JCM 11321 / PZ6).